A 201-amino-acid polypeptide reads, in one-letter code: Guanylate kinase (201 aa).

Positions 2–180 (SCLFVISAPS…AARDVASIVQ (179 aa)) constitute a Guanylate kinase-like domain. ATP is bound at residue 9–16 (APSGAGKT).

The protein belongs to the guanylate kinase family.

It is found in the cytoplasm. The enzyme catalyses GMP + ATP = GDP + ADP. Essential for recycling GMP and indirectly, cGMP. This chain is Guanylate kinase, found in Nitrosomonas europaea (strain ATCC 19718 / CIP 103999 / KCTC 2705 / NBRC 14298).